The following is a 104-amino-acid chain: Circadian clock oscillator protein KaiB (104 aa).

The protein belongs to the KaiB family. As to quaternary structure, the KaiABC complex composition changes during the circadian cycle to control KaiC phosphorylation. Complexes KaiC(6), KaiA(2-4):KaiC(6), KaiB(6):KaiC(6) and KaiC(6):KaiB(6):KaiA(12) are among the most important forms, many form cooperatively. Undergoes a major conformational rearrangment; in the free state forms homotetramers as a dimer of dimers. When bound to the CI domain of KaiC switches to a monomeric thioredoxin-fold (KaiB(fs)). KaiB(fs) binds CikA, leading it to dephosphorylate phospho-RpaA.

Functionally, key component of the KaiABC oscillator complex, which constitutes the main circadian regulator in cyanobacteria. Complex composition changes during the circadian cycle to control KaiC phosphorylation. KaiA stimulates KaiC autophosphorylation, while KaiB sequesters KaiA, leading to KaiC autodephosphorylation. Phospho-Ser-431 KaiC accumulation triggers binding of KaiB to form the KaiB(6):KaiC(6) complex, leading to changes in output regulators CikA and SasA. KaiB switches to a thioredoxin-like fold (KaiB(fs)) when bound to KaiC. KaiB(6):KaiC(6) formation exposes a site for KaiA binding that sequesters KaiA from KaiC, making the KaiC(6):KaiB(6):KaiA(12) complex that results in KaiC autodephosphorylation. Its function is as follows. A metamorphic protein which reversibly switches between an inactive tetrameric fold and a rare, thioredoxin-like monomeric fold (KaiB(fs)). KaiB(fs) binds phospho-KaiC, KaiA and CikA. KaiA and CikA compete for binding to KaiB(fs), and KaiB(fs) and SasA compete for binding to KaiC, thus the clock oscillator and output signal pathway are tightly coupled. The polypeptide is Circadian clock oscillator protein KaiB (Microcystis aeruginosa (strain NIES-843 / IAM M-2473)).